Here is a 185-residue protein sequence, read N- to C-terminus: Crossover junction endodeoxyribonuclease RuvC (185 aa).

Residues Asp-7, Glu-68, and Asp-141 contribute to the active site. Asp-7, Glu-68, and Asp-141 together coordinate Mg(2+).

Belongs to the RuvC family. In terms of assembly, homodimer which binds Holliday junction (HJ) DNA. The HJ becomes 2-fold symmetrical on binding to RuvC with unstacked arms; it has a different conformation from HJ DNA in complex with RuvA. In the full resolvosome a probable DNA-RuvA(4)-RuvB(12)-RuvC(2) complex forms which resolves the HJ. Mg(2+) is required as a cofactor.

The protein resides in the cytoplasm. The enzyme catalyses Endonucleolytic cleavage at a junction such as a reciprocal single-stranded crossover between two homologous DNA duplexes (Holliday junction).. In terms of biological role, the RuvA-RuvB-RuvC complex processes Holliday junction (HJ) DNA during genetic recombination and DNA repair. Endonuclease that resolves HJ intermediates. Cleaves cruciform DNA by making single-stranded nicks across the HJ at symmetrical positions within the homologous arms, yielding a 5'-phosphate and a 3'-hydroxyl group; requires a central core of homology in the junction. The consensus cleavage sequence is 5'-(A/T)TT(C/G)-3'. Cleavage occurs on the 3'-side of the TT dinucleotide at the point of strand exchange. HJ branch migration catalyzed by RuvA-RuvB allows RuvC to scan DNA until it finds its consensus sequence, where it cleaves and resolves the cruciform DNA. The sequence is that of Crossover junction endodeoxyribonuclease RuvC from Mycobacterium sp. (strain MCS).